The sequence spans 443 residues: Thymidine phosphorylase (443 aa).

It belongs to the thymidine/pyrimidine-nucleoside phosphorylase family. In terms of assembly, homodimer.

It carries out the reaction thymidine + phosphate = 2-deoxy-alpha-D-ribose 1-phosphate + thymine. It participates in pyrimidine metabolism; dTMP biosynthesis via salvage pathway; dTMP from thymine: step 1/2. Functionally, the enzymes which catalyze the reversible phosphorolysis of pyrimidine nucleosides are involved in the degradation of these compounds and in their utilization as carbon and energy sources, or in the rescue of pyrimidine bases for nucleotide synthesis. In Sodalis glossinidius (strain morsitans), this protein is Thymidine phosphorylase.